We begin with the raw amino-acid sequence, 121 residues long: Replication protein A 14 kDa subunit (121 aa).

Residue Val-2 is modified to N-acetylvaline. Glycyl lysine isopeptide (Lys-Gly) (interchain with G-Cter in ubiquitin) cross-links involve residues Lys-23, Lys-39, and Lys-88.

The protein belongs to the replication factor A protein 3 family. As to quaternary structure, component of the canonical replication protein A complex (RPA), a heterotrimer composed of RPA1, RPA2 and RPA3. Also a component of the aRPA, the alternative replication protein A complex, a trimeric complex similar to the replication protein A complex/RPA but where RPA1 and RPA3 are associated with RPA4 instead of RPA2. Interacts with BRIP1/FANCJ via the RPA1 subunit; following DNA damage they colocalize in foci in the nucleus. Post-translationally, ubiquitinated by RFWD3 at stalled replication forks in response to DNA damage: ubiquitination by RFWD3 does not lead to degradation by the proteasome and promotes removal of the RPA complex from stalled replication forks, promoting homologous recombination.

It is found in the nucleus. As part of the heterotrimeric replication protein A complex (RPA/RP-A), binds and stabilizes single-stranded DNA intermediates that form during DNA replication or upon DNA stress. It prevents their reannealing and in parallel, recruits and activates different proteins and complexes involved in DNA metabolism. Thereby, it plays an essential role both in DNA replication and the cellular response to DNA damage. In the cellular response to DNA damage, the RPA complex controls DNA repair and DNA damage checkpoint activation. Through recruitment of ATRIP activates the ATR kinase a master regulator of the DNA damage response. It is required for the recruitment of the DNA double-strand break repair factors RAD51 and RAD52 to chromatin, in response to DNA damage. Also recruits to sites of DNA damage proteins like XPA and XPG that are involved in nucleotide excision repair and is required for this mechanism of DNA repair. Also plays a role in base excision repair (BER), probably through interaction with UNG. RPA stimulates 5'-3' helicase activity of BRIP1/FANCJ. Also recruits SMARCAL1/HARP, which is involved in replication fork restart, to sites of DNA damage. May also play a role in telomere maintenance. RPA3 has its own single-stranded DNA-binding activity and may be responsible for polarity of the binding of the complex to DNA. As part of the alternative replication protein A complex, aRPA, binds single-stranded DNA and probably plays a role in DNA repair. Compared to the RPA2-containing, canonical RPA complex, may not support chromosomal DNA replication and cell cycle progression through S-phase. The aRPA may not promote efficient priming by DNA polymerase alpha but could support DNA synthesis by polymerase delta in presence of PCNA and replication factor C (RFC), the dual incision/excision reaction of nucleotide excision repair and RAD51-dependent strand exchange. In Homo sapiens (Human), this protein is Replication protein A 14 kDa subunit (RPA3).